The sequence spans 227 residues: Cytochrome c oxidase subunit 2 (227 aa).

Over 1–14 (MAHAAQVGLQDATS) the chain is Mitochondrial intermembrane. Residues 15–45 (PIMEELVIFHDHALMIIFLICFLVLYALFLT) form a helical membrane-spanning segment. Over 46–59 (LTTKLTNTSISDAQ) the chain is Mitochondrial matrix. The helical transmembrane segment at 60–87 (EMETIWTILPAIILILIALPSLRILYLT) threads the bilayer. Topologically, residues 88–227 (DEINDPSFTI…IFEMGPVFTL (140 aa)) are mitochondrial intermembrane. Residues His161, Cys196, Glu198, Cys200, His204, and Met207 each contribute to the Cu cation site. Residue Glu198 coordinates Mg(2+).

It belongs to the cytochrome c oxidase subunit 2 family. In terms of assembly, component of the cytochrome c oxidase (complex IV, CIV), a multisubunit enzyme composed of 14 subunits. The complex is composed of a catalytic core of 3 subunits MT-CO1, MT-CO2 and MT-CO3, encoded in the mitochondrial DNA, and 11 supernumerary subunits COX4I, COX5A, COX5B, COX6A, COX6B, COX6C, COX7A, COX7B, COX7C, COX8 and NDUFA4, which are encoded in the nuclear genome. The complex exists as a monomer or a dimer and forms supercomplexes (SCs) in the inner mitochondrial membrane with NADH-ubiquinone oxidoreductase (complex I, CI) and ubiquinol-cytochrome c oxidoreductase (cytochrome b-c1 complex, complex III, CIII), resulting in different assemblies (supercomplex SCI(1)III(2)IV(1) and megacomplex MCI(2)III(2)IV(2)). Found in a complex with TMEM177, COA6, COX18, COX20, SCO1 and SCO2. Interacts with TMEM177 in a COX20-dependent manner. Interacts with COX20. Interacts with COX16. Cu cation serves as cofactor.

It localises to the mitochondrion inner membrane. It carries out the reaction 4 Fe(II)-[cytochrome c] + O2 + 8 H(+)(in) = 4 Fe(III)-[cytochrome c] + 2 H2O + 4 H(+)(out). Its function is as follows. Component of the cytochrome c oxidase, the last enzyme in the mitochondrial electron transport chain which drives oxidative phosphorylation. The respiratory chain contains 3 multisubunit complexes succinate dehydrogenase (complex II, CII), ubiquinol-cytochrome c oxidoreductase (cytochrome b-c1 complex, complex III, CIII) and cytochrome c oxidase (complex IV, CIV), that cooperate to transfer electrons derived from NADH and succinate to molecular oxygen, creating an electrochemical gradient over the inner membrane that drives transmembrane transport and the ATP synthase. Cytochrome c oxidase is the component of the respiratory chain that catalyzes the reduction of oxygen to water. Electrons originating from reduced cytochrome c in the intermembrane space (IMS) are transferred via the dinuclear copper A center (CU(A)) of subunit 2 and heme A of subunit 1 to the active site in subunit 1, a binuclear center (BNC) formed by heme A3 and copper B (CU(B)). The BNC reduces molecular oxygen to 2 water molecules using 4 electrons from cytochrome c in the IMS and 4 protons from the mitochondrial matrix. The protein is Cytochrome c oxidase subunit 2 (MT-CO2) of Pongo abelii (Sumatran orangutan).